Here is a 335-residue protein sequence, read N- to C-terminus: Cytoskeleton protein RodZ (335 aa).

Over 1 to 111 (MNTEATHDQN…LGKRRKKRDG (111 aa)) the chain is Cytoplasmic. Residues 19–71 (LRNAREQLGLSQQAVAERLCLKVSTVRDIEEDKAPADLASTFLRGYIRSYARL) form the HTH cro/C1-type domain. A DNA-binding region (H-T-H motif) is located at residues 30–49 (QQAVAERLCLKVSTVRDIEE). A helical; Signal-anchor for type II membrane protein membrane pass occupies residues 112–132 (WLMTFTWLVLFVVIGLSGAWW). The Periplasmic segment spans residues 133-335 (WQDHKAQQEE…TLNAEQSPAQ (203 aa)). Over residues 148–164 (DQSSAELNNNQSQSVPL) the composition is skewed to polar residues. The segment at 148-239 (DQSSAELNNN…PDGAAPLPTD (92 aa)) is disordered. 2 stretches are compositionally biased toward low complexity: residues 165-205 (DTST…DPQQ) and 217-239 (DTAATPAPAATTTPDGAAPLPTD).

Belongs to the RodZ family.

It is found in the cell inner membrane. Cytoskeletal protein that is involved in cell-shape control through regulation of the length of the long axis. The polypeptide is Cytoskeleton protein RodZ (Escherichia coli O6:K15:H31 (strain 536 / UPEC)).